We begin with the raw amino-acid sequence, 461 residues long: Probable outer membrane lipoprotein SilC (461 aa).

The signal sequence occupies residues 1–17 (MFKLKLLSISTIFILAG). The N-palmitoyl cysteine moiety is linked to residue cysteine 18. Cysteine 18 carries S-diacylglycerol cysteine lipidation.

This sequence belongs to the outer membrane factor (OMF) (TC 1.B.17) family.

It localises to the cell outer membrane. Functionally, component of the sil cation-efflux system that confers resistance to silver. May be part of a three-component cation/proton antiporter. The sequence is that of Probable outer membrane lipoprotein SilC (silC) from Salmonella typhimurium.